The primary structure comprises 157 residues: UPF0251 protein CLD_3165 (157 aa).

Belongs to the UPF0251 family.

This is UPF0251 protein CLD_3165 from Clostridium botulinum (strain Okra / Type B1).